Consider the following 972-residue polypeptide: MISNKRKEIENINRHHEKDNDDDDSDGIDNGLLTYKKFKKDFDSGSTNYRELQIIAKSLGLASNGKKQLVYNRIEGYFLSKKVKNNLTNNETNQQEEKKEEEQQQPQPQEKQYILTFKDVEPVEIYFWKVFRNIVIFKHIFSNFKNKQYGYYDLIGCNGVFLNGKSNSMEIIIDNIKSNNNNQIIRNKYNITNIINKFKKNDEKTRSFYNLLFSRYSSTSTSLPIQLSSTIQFDEDIDKWIQRMIENVNFTALDQFIKFFKIDSEVIKKAIKIHVKPSVFGNTTYDKLKIYNYLKSINSIPTSHKLLPFISTDLSAFLSFDNKFKKLIKSYKRLIESTNLQERMEQQEQKEKIKIHPNNKKYYEKLNQKILELNEIQTSQFTNDQLNSTIKNLLNHTTPTSTSTSTSTSTSTLTLTLTPTTNLTITTSTASNNINLKDIIKKFYKSICLFFYCSVYSANERLFRKPLLYYLNFKKESVDKMYERVVNKWNGRSFDHQLFFQSILKDINIEKNEKFELILNVLDNKYVKTFEEYDHYIFFKAVFSSNDIELIDYFLKKIKQLQLNQTQKITKYPSIGKLIGDYCHLIDKKEILDFYFQNYRDECLFFKDQNEIWKQIQLELIEHYEYLMDSIGKRCKLDFYRWFDQNFLDRLNIAILKPSVYSIGFDGYFDIVSEGLVDSNIKDNKENSIINFLSNAQLKHPLSLEIFESSFNPYTSKMLTFIKFLFNNISKESIETKLKVINLKTDNKSFEEINSKIELTTTLTATTTTTTTTTTTKTTTTTTTTANLLSPKKSKDVGCLTIGKTESFNFTISIRMLLVCLYNLDRVDDIIYLFDKLPEVLFNPDYFSIFTNEYCIYGISSSYYLELFINYFIANINDNTINYLYNCLCIASKKGYTQIFKNIISSDQNSKYLLKIQTKSNQSSLFNSKLLNDIVVKSINSLNFELSNLLIDFIDFSAKDKNSLKMKILKLK.

Residues 1 to 19 show a composition bias toward basic and acidic residues; it reads MISNKRKEIENINRHHEKD. Positions 1–30 are disordered; sequence MISNKRKEIENINRHHEKDNDDDDSDGIDN. The SAP domain occupies 44–78; sequence SGSTNYRELQIIAKSLGLASNGKKQLVYNRIEGYF.

It belongs to the UPF0746 family.

The sequence is that of UPF0746 protein DDB_G0280785 from Dictyostelium discoideum (Social amoeba).